We begin with the raw amino-acid sequence, 361 residues long: Chorismate synthase (361 aa).

Positions 48 and 54 each coordinate NADP(+). Residues 125–127 (RSS), 238–239 (NA), G278, 293–297 (KPTSS), and R319 each bind FMN.

Belongs to the chorismate synthase family. Homotetramer. FMNH2 serves as cofactor.

It catalyses the reaction 5-O-(1-carboxyvinyl)-3-phosphoshikimate = chorismate + phosphate. It functions in the pathway metabolic intermediate biosynthesis; chorismate biosynthesis; chorismate from D-erythrose 4-phosphate and phosphoenolpyruvate: step 7/7. Its function is as follows. Catalyzes the anti-1,4-elimination of the C-3 phosphate and the C-6 proR hydrogen from 5-enolpyruvylshikimate-3-phosphate (EPSP) to yield chorismate, which is the branch point compound that serves as the starting substrate for the three terminal pathways of aromatic amino acid biosynthesis. This reaction introduces a second double bond into the aromatic ring system. The sequence is that of Chorismate synthase from Cronobacter sakazakii (strain ATCC BAA-894) (Enterobacter sakazakii).